We begin with the raw amino-acid sequence, 225 residues long: Ribulose-phosphate 3-epimerase (225 aa).

Residue serine 10 participates in substrate binding. Positions 35, 37, and 68 each coordinate a divalent metal cation. Aspartate 37 serves as the catalytic Proton acceptor. Residues histidine 68, 144–147 (GFGG), and 175–177 (DGG) each bind substrate. Aspartate 175 contacts a divalent metal cation. The active-site Proton donor is the aspartate 175.

The protein belongs to the ribulose-phosphate 3-epimerase family. The cofactor is a divalent metal cation.

It catalyses the reaction D-ribulose 5-phosphate = D-xylulose 5-phosphate. It participates in carbohydrate degradation. Functionally, catalyzes the reversible epimerization of D-ribulose 5-phosphate to D-xylulose 5-phosphate. The protein is Ribulose-phosphate 3-epimerase of Rhodospirillum rubrum.